A 188-amino-acid chain; its full sequence is dCTP deaminase (188 aa).

Residues 111 to 116 (KSTYAR), 135 to 137 (TLE), Q156, Y170, and Q180 each bind dCTP. E137 (proton donor/acceptor) is an active-site residue.

This sequence belongs to the dCTP deaminase family. As to quaternary structure, homotrimer.

It carries out the reaction dCTP + H2O + H(+) = dUTP + NH4(+). It participates in pyrimidine metabolism; dUMP biosynthesis; dUMP from dCTP (dUTP route): step 1/2. Functionally, catalyzes the deamination of dCTP to dUTP. This chain is dCTP deaminase, found in Methylococcus capsulatus (strain ATCC 33009 / NCIMB 11132 / Bath).